The sequence spans 38 residues: Allatostatin-C (38 aa).

Residues 1 to 19 constitute a propeptide that is removed on maturation; it reads MRRALDGPGSSSLDTRQAD. A Pyrrolidone carboxylic acid; partial modification is found at glutamine 22.

This sequence belongs to the allatostatin family. In its non-pyroglutamate form, expressed in antennal lobe (AL), corpora cardiaca (CC), corpora allata (CA) and gnathal ganglion (GNG) with expression in AL detected in most animals and expression in CC, CA and GNG detected in few animals (at protein level). In its pyroglutamate form, expressed in antennal lobe (AL), corpora cardiaca (CC) and corpora allata (CA) with expression detected in few animals (at protein level). Not expressed in GNG (protein level).

It localises to the secreted. In terms of biological role, strongly inhibits juvenile hormone biosynthesis. The polypeptide is Allatostatin-C (Agrotis ipsilon (Black cutworm moth)).